The following is a 224-amino-acid chain: MPGGLLLGDEAPNFEANTTIGRIRFHDFLGDSWGILFSHPRDFTPVCTTELGRAAKLAPEFAKRNVKMIALSIDSVEDHLAWSKDINAYNGEEPKETLPFPIIDDKSRDLAIQLGMLDPAEKDEQGMPVTARVVFIFGPDKKLKLSILYPATTGRNFDEILRVIISLQLTAEKRVATPVDWKNGDSVMVLPNIPEEEAKKLFPKGVFTKELPSGKKYLRYTPQP.

Positions 5 to 169 (LLLGDEAPNF…ILRVIISLQL (165 aa)) constitute a Thioredoxin domain. The interval 31–40 (DSWGILFSHP) is required and sufficient for targeting to lysosomes and lamellar bodies. Position 44 is a phosphothreonine (Thr44). Residue Cys47 is the Cysteine sulfenic acid (-SOH) intermediate; for peroxidase activity of the active site. At Lys63 the chain carries N6-acetyllysine. Phosphotyrosine is present on Tyr89. The active-site For phospholipase activity is the Asp140. Residue Thr177 is modified to Phosphothreonine; by MAPK. Position 209 is an N6-acetyllysine; alternate (Lys209). Lys209 carries the N6-succinyllysine; alternate modification.

This sequence belongs to the peroxiredoxin family. Prx6 subfamily. In terms of assembly, homodimer. Interacts with GSTP1; mediates PRDX6 glutathionylation and regeneration. Interacts with APEX1. Interacts with STH. May interact with FAM168B. May interact with HTR2A. Irreversibly inactivated by overoxidation of Cys-47 to sulfinic acid (Cys-SO(2)H) and sulfonic acid (Cys-SO(3)H) forms upon oxidative stress. Post-translationally, phosphorylation at Thr-177 by MAP kinases increases the phospholipase activity of the enzyme. The phosphorylated form exhibits a greater lysophosphatidylcholine acyltransferase activity compared to the non-phosphorylated form.

The protein resides in the cytoplasm. It localises to the lysosome. It catalyses the reaction a hydroperoxide + 2 glutathione = an alcohol + glutathione disulfide + H2O. The enzyme catalyses a 1,2-diacyl-sn-glycero-3-phosphocholine + H2O = a 1-acyl-sn-glycero-3-phosphocholine + a fatty acid + H(+). It carries out the reaction a 1-acyl-sn-glycero-3-phosphocholine + an acyl-CoA = a 1,2-diacyl-sn-glycero-3-phosphocholine + CoA. The catalysed reaction is 1-hexadecanoyl-sn-glycero-3-phosphocholine + hexadecanoyl-CoA = 1,2-dihexadecanoyl-sn-glycero-3-phosphocholine + CoA. It catalyses the reaction 1,2-dihexadecanoyl-sn-glycero-3-phosphocholine + H2O = 1-hexadecanoyl-sn-glycero-3-phosphocholine + hexadecanoate + H(+). In terms of biological role, thiol-specific peroxidase that catalyzes the reduction of hydrogen peroxide and organic hydroperoxides to water and alcohols, respectively. Can reduce H(2)O(2) and short chain organic, fatty acid, and phospholipid hydroperoxides. Also has phospholipase activity, and can therefore either reduce the oxidized sn-2 fatty acyl group of phospholipids (peroxidase activity) or hydrolyze the sn-2 ester bond of phospholipids (phospholipase activity). These activities are dependent on binding to phospholipids at acidic pH and to oxidized phospholipds at cytosolic pH. Plays a role in cell protection against oxidative stress by detoxifying peroxides and in phospholipid homeostasis. Exhibits acyl-CoA-dependent lysophospholipid acyltransferase which mediates the conversion of lysophosphatidylcholine (1-acyl-sn-glycero-3-phosphocholine or LPC) into phosphatidylcholine (1,2-diacyl-sn-glycero-3-phosphocholine or PC). Shows a clear preference for LPC as the lysophospholipid and for palmitoyl CoA as the fatty acyl substrate. This chain is Peroxiredoxin-6 (PRDX6), found in Sus scrofa (Pig).